A 492-amino-acid chain; its full sequence is ATP synthase subunit beta, chloroplastic (492 aa).

ATP is bound at residue 170–177 (GGAGVGKT).

Belongs to the ATPase alpha/beta chains family. In terms of assembly, F-type ATPases have 2 components, CF(1) - the catalytic core - and CF(0) - the membrane proton channel. CF(1) has five subunits: alpha(3), beta(3), gamma(1), delta(1), epsilon(1). CF(0) has four main subunits: a(1), b(1), b'(1) and c(9-12).

It is found in the plastid. Its subcellular location is the chloroplast thylakoid membrane. The enzyme catalyses ATP + H2O + 4 H(+)(in) = ADP + phosphate + 5 H(+)(out). In terms of biological role, produces ATP from ADP in the presence of a proton gradient across the membrane. The catalytic sites are hosted primarily by the beta subunits. This Huperzia lucidula (Shining clubmoss) protein is ATP synthase subunit beta, chloroplastic.